The following is a 284-amino-acid chain: Tropomyosin-2 (284 aa).

Residues M1–Y284 are a coiled coil. The disordered stretch occupies residues E82–Q110.

Belongs to the tropomyosin family. As to quaternary structure, homodimer.

Its function is as follows. Tropomyosin, in association with the troponin complex, plays a central role in the calcium dependent regulation of muscle contraction. May also regulate motor systems required to maintain nuclear integrity and apico-basal polarity during embryogenesis. The chain is Tropomyosin-2 (Tm2) from Drosophila melanogaster (Fruit fly).